Reading from the N-terminus, the 877-residue chain is Clumping factor B (877 aa).

The signal sequence occupies residues 1–44; sequence MKKRIDYLSNKQNKYSIRRFTVGTTSVIVGATILFGIGNHQAQA. The short motif at 15–26 is the YSIRK-G/S signaling motif element; it reads YSIRRFTVGTTS. Polar residues-rich tracts occupy residues 44 to 61 and 68 to 95; these read ASEQ…NASA and MIET…NVDS. Residues 44–192 are disordered; that stretch reads ASEQSNDTTQ…QGTSKPSVRT (149 aa). Positions 45-542 are ligand binding A region; the sequence is SEQSNDTTQS…GSADGDSAVN (498 aa). Low complexity predominate over residues 96 to 119; sequence TTKPMSTQTSNTTTTEPASTNETP. The span at 120 to 189 shows a compositional bias: polar residues; that stretch reads QPTAIKNQAT…SNAQGTSKPS (70 aa). The MIDAS-like motif signature appears at 272–276; it reads DYSNS. The disordered stretch occupies residues 530-849; it reads YGGGSADGDS…ETGDKSENTN (320 aa). Over residues 545 to 555 the composition is skewed to pro residues; that stretch reads DPTPGPPVDPE. A compositionally biased stretch (acidic residues) spans 556 to 801; that stretch reads PSPDPEPEPT…SDSDSDSDSD (246 aa). The segment covering 805–816 has biased composition (polar residues); that stretch reads RVTPPNNEQKAP. Over residues 833–846 the composition is skewed to basic and acidic residues; sequence HKTDALPETGDKSE. Residues 838-842 carry the LPXTG sorting signal motif; that stretch reads LPETG. Threonine 841 carries the post-translational modification Pentaglycyl murein peptidoglycan amidated threonine. Positions 842-877 are cleaved as a propeptide — removed by sortase; the sequence is GDKSENTNATLFGAMMALLGSLLLFRKRKQDHKEKA.

Belongs to the serine-aspartate repeat-containing protein (SDr) family. Post-translationally, proteolytically cleaved by aureolysin (aur). This cleavage leads to the inactivation of ClfB.

It localises to the secreted. Its subcellular location is the cell wall. In terms of biological role, cell surface-associated protein implicated in virulence by promoting bacterial attachment to both alpha- and beta-chains of human fibrinogen and inducing the formation of bacterial clumps. Partly responsible for mediating bacterial attachment to the highly keratinized squamous epithelial cells from the nasal cavity via an interaction with cytokeratin K10 (K10). Also promotes bacterial attachment to cultured keratinocytes, possibly through an interaction with cytokeratin K10. Binds mouse cytokeratin K10. Activates human platelet aggregation. The sequence is that of Clumping factor B (clfB) from Staphylococcus aureus (strain NCTC 8325 / PS 47).